The primary structure comprises 148 residues: Ribonuclease H (148 aa).

An RNase H type-1 domain is found at 3-144; it reads DKEQVVIYTD…ADQLANRGVA (142 aa). Residues aspartate 12, glutamate 50, aspartate 72, and aspartate 136 each coordinate Mg(2+). Residues 125-148 form a disordered region; that stretch reads GHTGDPGNERADQLANRGVAELPR.

Belongs to the RNase H family. In terms of assembly, monomer. Requires Mg(2+) as cofactor.

It localises to the cytoplasm. It catalyses the reaction Endonucleolytic cleavage to 5'-phosphomonoester.. Endonuclease that specifically degrades the RNA of RNA-DNA hybrids. This Pseudomonas paraeruginosa (strain DSM 24068 / PA7) (Pseudomonas aeruginosa (strain PA7)) protein is Ribonuclease H.